A 449-amino-acid polypeptide reads, in one-letter code: C4-dicarboxylate transport protein (449 aa).

Residues 1 to 20 (MSALTESFGPVPSAKSKPPA) form a disordered region. Positions 10 to 20 (PVPSAKSKPPA) are enriched in low complexity. 8 helical membrane passes run 28-48 (LLYLQVLVAIVLGVLLGWLSP), 66-86 (LIKMVIAPIIFCTVVSGIAHI), 101-121 (LYFEVVSSFALLIGLVVGNVV), 167-187 (GDILQVLLFAILFGFALMTLG), 205-225 (FGVIAIVMKAAPVGAFGAMAF), 241-261 (LIAVFYITAALFVVLVLGLIA), 326-346 (IYMTLATLFIAQALGVDLTWT), and 370-390 (FITLAATLSVVNPALVPGMAI).

This sequence belongs to the dicarboxylate/amino acid:cation symporter (DAACS) (TC 2.A.23) family.

It is found in the cell inner membrane. Responsible for the transport of dicarboxylates such as succinate, fumarate, and malate from the periplasm across the membrane. This is C4-dicarboxylate transport protein from Rhodopseudomonas palustris (strain BisB18).